The following is a 101-amino-acid chain: Guanyl-specific ribonuclease Po1 (101 aa).

Residue Q1 is modified to Pyrrolidone carboxylic acid. 3 cysteine pairs are disulfide-bonded: C7–C84, C9–C99, and C48–C82. Residue H36 is part of the active site. E54 (proton acceptor) is an active-site residue. H87 acts as the Proton donor in catalysis.

Belongs to the ribonuclease N1/T1 family.

The catalysed reaction is [RNA] containing guanosine + H2O = an [RNA fragment]-3'-guanosine-3'-phosphate + a 5'-hydroxy-ribonucleotide-3'-[RNA fragment].. With respect to regulation, inhibited by divalent cations. Inhibition decreases in the order zinc, lead, cadmium, nickel, mercury. This chain is Guanyl-specific ribonuclease Po1, found in Pleurotus ostreatus (Oyster mushroom).